The chain runs to 83 residues: ATP synthase subunit c 2 (83 aa).

Helical transmembrane passes span 8–28 and 58–78; these read IASILGAAFAVGIGSLGPALG and LAMIETMAIYCLVIALLLLFA.

This sequence belongs to the ATPase C chain family. As to quaternary structure, F-type ATPases have 2 components, F(1) - the catalytic core - and F(0) - the membrane proton channel. F(1) has five subunits: alpha(3), beta(3), gamma(1), delta(1), epsilon(1). F(0) has four main subunits: a(1), b(1), b'(1) and c(10-14). The alpha and beta chains form an alternating ring which encloses part of the gamma chain. F(1) is attached to F(0) by a central stalk formed by the gamma and epsilon chains, while a peripheral stalk is formed by the delta, b and b' chains.

It is found in the cell inner membrane. Its function is as follows. F(1)F(0) ATP synthase produces ATP from ADP in the presence of a proton or sodium gradient. F-type ATPases consist of two structural domains, F(1) containing the extramembraneous catalytic core and F(0) containing the membrane proton channel, linked together by a central stalk and a peripheral stalk. During catalysis, ATP synthesis in the catalytic domain of F(1) is coupled via a rotary mechanism of the central stalk subunits to proton translocation. In terms of biological role, key component of the F(0) channel; it plays a direct role in translocation across the membrane. A homomeric c-ring of between 10-14 subunits forms the central stalk rotor element with the F(1) delta and epsilon subunits. The polypeptide is ATP synthase subunit c 2 (Cereibacter sphaeroides (strain ATCC 17029 / ATH 2.4.9) (Rhodobacter sphaeroides)).